Consider the following 271-residue polypeptide: ATP synthase subunit a (271 aa).

5 consecutive transmembrane segments (helical) span residues Thr40–Phe60, Leu100–Leu120, Asp146–Ile166, Leu220–Pro240, and Ala242–Val262.

Belongs to the ATPase A chain family. In terms of assembly, F-type ATPases have 2 components, CF(1) - the catalytic core - and CF(0) - the membrane proton channel. CF(1) has five subunits: alpha(3), beta(3), gamma(1), delta(1), epsilon(1). CF(0) has three main subunits: a(1), b(2) and c(9-12). The alpha and beta chains form an alternating ring which encloses part of the gamma chain. CF(1) is attached to CF(0) by a central stalk formed by the gamma and epsilon chains, while a peripheral stalk is formed by the delta and b chains.

It is found in the cell inner membrane. Functionally, key component of the proton channel; it plays a direct role in the translocation of protons across the membrane. In Escherichia coli O1:K1 / APEC, this protein is ATP synthase subunit a.